Consider the following 404-residue polypeptide: Serine/threonine transporter SstT (404 aa).

The next 8 membrane-spanning stretches (helical) occupy residues 10–30 (ILGG…ICLA), 53–73 (AIAP…KEVG), 81–101 (ILVM…ILSY), 140–160 (AITN…GIAL), 177–197 (AVSF…FGLV), 215–235 (LLAV…PLLV), 287–307 (IAIP…ITVL), and 329–349 (IVAS…LLLI).

Belongs to the dicarboxylate/amino acid:cation symporter (DAACS) (TC 2.A.23) family.

The protein localises to the cell inner membrane. The catalysed reaction is L-serine(in) + Na(+)(in) = L-serine(out) + Na(+)(out). It catalyses the reaction L-threonine(in) + Na(+)(in) = L-threonine(out) + Na(+)(out). In terms of biological role, involved in the import of serine and threonine into the cell, with the concomitant import of sodium (symport system). The polypeptide is Serine/threonine transporter SstT (Glaesserella parasuis serovar 5 (strain SH0165) (Haemophilus parasuis)).